The following is a 440-amino-acid chain: Actin-like protein 7A (440 aa).

The segment at 1–27 (MSLDAVWAPQTANIGDGPAKKASDQTS) is disordered. The required for interaction with TES stretch occupies residues 36–56 (ASLRDGPAKRAVWVRRDNAEK).

This sequence belongs to the actin family. In terms of assembly, interacts (via N-terminus) with TES (via LIM domain 2). Heterodimer with TES; the heterodimer interacts with ENAH to form a heterotrimer. Interacts with ACTL9. Interacts with CYLC1; the interaction may be relevant for proper acrosome attachment to the nuclear envelope. In terms of tissue distribution, detected in testis. Detected at the acrosome of round spermatids (at protein level).

The protein localises to the cytoplasm. It is found in the cytoskeleton. It localises to the golgi apparatus. Its subcellular location is the nucleus. Functionally, essential for normal spermatogenesis and male fertility. Required for normal sperm head morphology, acroplaxome formation, acrosome attachment, and acrosome granule stability. May anchor and stabilize acrosomal adherence to the acroplaxome at least in part by facilitating the presence of F-actin in the subacrosomal space. May play an important role in formation and fusion of Golgi-derived vesicles during acrosome biogenesis. The polypeptide is Actin-like protein 7A (Actl7a) (Rattus norvegicus (Rat)).